The following is a 358-amino-acid chain: Heme A synthase (358 aa).

Helical transmembrane passes span 25–45, 111–131, 141–161, 176–196, 210–230, 269–289, 304–324, and 326–346; these read LVRYWLYAVFAVLIAIVMVGG, LLARFVGFLVAVPLGFFWLTG, MLGLLALGGLQGAIGWWMVAS, IHLTTACVIITAVFYIARGLV, FAGWIVFAVLVQIYLGGLVAG, VQFVHRMFAYTVLLLAILHAV, TIVLVGLVFIQAMIGIATLLM, and APLHLGLTHQFFALVVLAFAV. Histidine 273 lines the heme pocket. Position 334 (histidine 334) interacts with heme.

It belongs to the COX15/CtaA family. Type 2 subfamily. As to quaternary structure, interacts with CtaB. Heme b is required as a cofactor.

Its subcellular location is the cell membrane. It catalyses the reaction Fe(II)-heme o + 2 A + H2O = Fe(II)-heme a + 2 AH2. It participates in porphyrin-containing compound metabolism; heme A biosynthesis; heme A from heme O: step 1/1. In terms of biological role, catalyzes the conversion of heme O to heme A by two successive hydroxylations of the methyl group at C8. The first hydroxylation forms heme I, the second hydroxylation results in an unstable dihydroxymethyl group, which spontaneously dehydrates, resulting in the formyl group of heme A. The sequence is that of Heme A synthase from Brucella suis (strain ATCC 23445 / NCTC 10510).